We begin with the raw amino-acid sequence, 363 residues long: Ethanol acetyltransferase 1 (363 aa).

A mitochondrion-targeting transit peptide spans 1 to 19; it reads MLLAYTVRPSNWSFTRRAY. The AB hydrolase-1 domain occupies 65–164; that stretch reads PIIFYHGLLG…FSAACIIDNS (100 aa). Catalysis depends on charge relay system residues Ser138, Asp162, and His313.

The protein belongs to the AB hydrolase superfamily.

It is found in the mitochondrion. The enzyme catalyses ethanol + acetyl-CoA = ethyl acetate + CoA. The catalysed reaction is acetyl-CoA + H2O = acetate + CoA + H(+). It carries out the reaction ethyl acetate + H2O = ethanol + acetate + H(+). In terms of biological role, alcohol acetyltransferase that catalyzes the synthesis of ethyl acetate from ethanol and acetyl-CoA. Can also function as a thioesterase by hydrolyzing acetyl-CoA in the absence of ethanol, as well as esterase hydrolyzing ethyl acetate. In Kluyveromyces marxianus (strain DMKU3-1042 / BCC 29191 / NBRC 104275) (Yeast), this protein is Ethanol acetyltransferase 1 (EAT1).